The sequence spans 122 residues: Methylglyoxal synthase (122 aa).

Positions methionine 1–lysine 122 constitute an MGS-like domain. Substrate is bound by residues histidine 8, lysine 12, threonine 34–threonine 37, and serine 54–glycine 55. Aspartate 60 (proton donor/acceptor) is an active-site residue. Residue histidine 87 coordinates substrate.

The protein belongs to the methylglyoxal synthase family.

The catalysed reaction is dihydroxyacetone phosphate = methylglyoxal + phosphate. Its function is as follows. Catalyzes the formation of methylglyoxal from dihydroxyacetone phosphate. In Acholeplasma laidlawii (strain PG-8A), this protein is Methylglyoxal synthase.